The primary structure comprises 95 residues: Aspartyl/glutamyl-tRNA(Asn/Gln) amidotransferase subunit C (95 aa).

This sequence belongs to the GatC family. In terms of assembly, heterotrimer of A, B and C subunits.

The catalysed reaction is L-glutamyl-tRNA(Gln) + L-glutamine + ATP + H2O = L-glutaminyl-tRNA(Gln) + L-glutamate + ADP + phosphate + H(+). The enzyme catalyses L-aspartyl-tRNA(Asn) + L-glutamine + ATP + H2O = L-asparaginyl-tRNA(Asn) + L-glutamate + ADP + phosphate + 2 H(+). Allows the formation of correctly charged Asn-tRNA(Asn) or Gln-tRNA(Gln) through the transamidation of misacylated Asp-tRNA(Asn) or Glu-tRNA(Gln) in organisms which lack either or both of asparaginyl-tRNA or glutaminyl-tRNA synthetases. The reaction takes place in the presence of glutamine and ATP through an activated phospho-Asp-tRNA(Asn) or phospho-Glu-tRNA(Gln). This is Aspartyl/glutamyl-tRNA(Asn/Gln) amidotransferase subunit C from Geotalea uraniireducens (strain Rf4) (Geobacter uraniireducens).